The primary structure comprises 210 residues: Ribosomal RNA large subunit methyltransferase E (210 aa).

Residues glycine 67, tryptophan 69, aspartate 87, aspartate 103, and aspartate 128 each contribute to the S-adenosyl-L-methionine site. Lysine 168 functions as the Proton acceptor in the catalytic mechanism.

Belongs to the class I-like SAM-binding methyltransferase superfamily. RNA methyltransferase RlmE family.

It localises to the cytoplasm. The enzyme catalyses uridine(2552) in 23S rRNA + S-adenosyl-L-methionine = 2'-O-methyluridine(2552) in 23S rRNA + S-adenosyl-L-homocysteine + H(+). Its function is as follows. Specifically methylates the uridine in position 2552 of 23S rRNA at the 2'-O position of the ribose in the fully assembled 50S ribosomal subunit. This Psychrobacter sp. (strain PRwf-1) protein is Ribosomal RNA large subunit methyltransferase E.